We begin with the raw amino-acid sequence, 124 residues long: MMAAASPTRAGQAAETQALEYLQGQGLQLLARNWRCKGGELDLVMLDADTVVFVEVRYRLHAGFGGALDSIDGRKQKRLVLAATLFLQKEAHWGNYPCRFDVVALQGSHHAGRPLQWLKNAFEC.

This sequence belongs to the UPF0102 family.

This Pseudomonas putida (strain ATCC 47054 / DSM 6125 / CFBP 8728 / NCIMB 11950 / KT2440) protein is UPF0102 protein PP_1324.